A 129-amino-acid polypeptide reads, in one-letter code: Small ribosomal subunit protein uS11 (129 aa).

The protein belongs to the universal ribosomal protein uS11 family. As to quaternary structure, part of the 30S ribosomal subunit. Interacts with proteins S7 and S18. Binds to IF-3.

Located on the platform of the 30S subunit, it bridges several disparate RNA helices of the 16S rRNA. Forms part of the Shine-Dalgarno cleft in the 70S ribosome. This is Small ribosomal subunit protein uS11 from Anoxybacillus flavithermus (strain DSM 21510 / WK1).